Here is a 220-residue protein sequence, read N- to C-terminus: Inner membrane-spanning protein YciB (220 aa).

6 helical membrane-spanning segments follow: residues 20–40 (EVPP…FFFA), 57–77 (IGAP…IALA), 86–106 (LPIM…LTLW), 123–143 (LFGG…GYVF), 156–176 (KLTL…EIVW), and 187–207 (FKVW…MPLI).

The protein belongs to the YciB family.

The protein localises to the cell inner membrane. In terms of biological role, plays a role in cell envelope biogenesis, maintenance of cell envelope integrity and membrane homeostasis. This chain is Inner membrane-spanning protein YciB, found in Brucella abortus (strain S19).